The sequence spans 369 residues: Aspartate beta-hydroxylase domain-containing protein 2 (369 aa).

Over 1 to 58 (MVWAPLGPPRTDCLTLLHTPSKDSPKMSLEWLVAWSWSLDGLRDCIATGIQSVRDCDT) the chain is Cytoplasmic. Residues 59–79 (TAVITVACLLVLFVWYCYHVG) form a helical membrane-spanning segment. At 80 to 369 (REQPRPYVSV…ALDFIFAPGR (290 aa)) the chain is on the lumenal side. Asn211 carries an N-linked (GlcNAc...) asparagine glycan. Trp228 and Ser272 together coordinate 2-oxoglutarate. His283 contacts Fe cation. 292-294 (RCH) lines the 2-oxoglutarate pocket. His328 provides a ligand contact to Fe cation. Residue Arg341 participates in 2-oxoglutarate binding.

It belongs to the aspartyl/asparaginyl beta-hydroxylase family. Requires Fe cation as cofactor.

The protein resides in the membrane. May function as 2-oxoglutarate-dependent dioxygenase. The protein is Aspartate beta-hydroxylase domain-containing protein 2 (ASPHD2) of Homo sapiens (Human).